Here is a 224-residue protein sequence, read N- to C-terminus: uncharacterized protein (224 aa).

Residues 11–42 (YYCKYCQIFVKDTPFARRSHEQTYKHQDAIKK) form a Matrin-type zinc finger. A compositionally biased stretch (low complexity) spans 67–80 (ATATTASAVSSELA). Disordered regions lie at residues 67–158 (ATAT…RNRE) and 172–224 (VKPK…YDQS). Over residues 87 to 98 (KEHPKLRPSKKK) the composition is skewed to basic residues. Positions 108–122 (TSSTETDTISTTHTS) are enriched in low complexity. Over residues 175-199 (KNLDKVPKLAENEGNKSLESKESNE) the composition is skewed to basic and acidic residues. Over residues 203–216 (VFKKKKSGKLRTKS) the composition is skewed to basic residues.

It is found in the nucleus. It localises to the nucleolus. This is an uncharacterized protein from Schizosaccharomyces pombe (strain 972 / ATCC 24843) (Fission yeast).